A 195-amino-acid chain; its full sequence is MNPHERIERHFSAHIEAAQEALTMLGDAIEIAAAKLAHCLLSDGKILCCGNGGSAAQAQHFSSEMLNRFERERPGLPAVALTTDTSTLTSIANDYHFDEVFAKQVRALGHAGDILVIYSTSGISPSVLSAAVAAQDRDMSIIALNGRDGGTLAPLLRDTDVEIRVTAPSTARIQEIHLLITHCLCDLVDHQLFGE.

An SIS domain is found at 36–195; that stretch reads LAHCLLSDGK…DLVDHQLFGE (160 aa). 51 to 53 contacts substrate; that stretch reads NGG. The Zn(2+) site is built by His-60 and Glu-64. Substrate-binding positions include Glu-64, 93–94, 119–121, Ser-124, and Gln-174; these read ND and STS. The Zn(2+) site is built by Gln-174 and His-182.

Belongs to the SIS family. GmhA subfamily. Homotetramer. Requires Zn(2+) as cofactor.

The protein resides in the cytoplasm. It carries out the reaction 2 D-sedoheptulose 7-phosphate = D-glycero-alpha-D-manno-heptose 7-phosphate + D-glycero-beta-D-manno-heptose 7-phosphate. It functions in the pathway carbohydrate biosynthesis; D-glycero-D-manno-heptose 7-phosphate biosynthesis; D-glycero-alpha-D-manno-heptose 7-phosphate and D-glycero-beta-D-manno-heptose 7-phosphate from sedoheptulose 7-phosphate: step 1/1. Functionally, catalyzes the isomerization of sedoheptulose 7-phosphate in D-glycero-D-manno-heptose 7-phosphate. This chain is Phosphoheptose isomerase, found in Methylococcus capsulatus (strain ATCC 33009 / NCIMB 11132 / Bath).